Consider the following 162-residue polypeptide: 2-C-methyl-D-erythritol 2,4-cyclodiphosphate synthase (162 aa).

A divalent metal cation is bound by residues D12 and H14. 4-CDP-2-C-methyl-D-erythritol 2-phosphate contacts are provided by residues 12-14 (DVH) and 38-39 (HS). Residue H46 participates in a divalent metal cation binding. 4-CDP-2-C-methyl-D-erythritol 2-phosphate contacts are provided by residues 60–62 (DIG), 65–69 (FPDTD), and R146.

The protein belongs to the IspF family. Homotrimer. It depends on a divalent metal cation as a cofactor.

It catalyses the reaction 4-CDP-2-C-methyl-D-erythritol 2-phosphate = 2-C-methyl-D-erythritol 2,4-cyclic diphosphate + CMP. It participates in isoprenoid biosynthesis; isopentenyl diphosphate biosynthesis via DXP pathway; isopentenyl diphosphate from 1-deoxy-D-xylulose 5-phosphate: step 4/6. Involved in the biosynthesis of isopentenyl diphosphate (IPP) and dimethylallyl diphosphate (DMAPP), two major building blocks of isoprenoid compounds. Catalyzes the conversion of 4-diphosphocytidyl-2-C-methyl-D-erythritol 2-phosphate (CDP-ME2P) to 2-C-methyl-D-erythritol 2,4-cyclodiphosphate (ME-CPP) with a corresponding release of cytidine 5-monophosphate (CMP). In Bordetella petrii (strain ATCC BAA-461 / DSM 12804 / CCUG 43448), this protein is 2-C-methyl-D-erythritol 2,4-cyclodiphosphate synthase.